Reading from the N-terminus, the 149-residue chain is MPTVRLFTCFLQLLTGLVLPAVPTTQWALSPGNISSEVEVVPFQQVWSRSYCRPVERLVDIVSEYPSEMEHLFSPSCVSLMRCTGCCSDESMHCVPLETANVTMQLMKYRSLDQPFFVEMSFSQHVRCECKPLWEKMKQTRCGDTISQR.

The first 18 residues, 1-18, serve as a signal peptide directing secretion; that stretch reads MPTVRLFTCFLQLLTGLV. N-linked (GlcNAc...) asparagine glycosylation occurs at N33. Intrachain disulfides connect C52-C94, C83-C128, and C87-C130. The N-linked (GlcNAc...) asparagine glycan is linked to N101.

This sequence belongs to the PDGF/VEGF growth factor family. Antiparallel homodimer; disulfide-linked. Also found as heterodimer with VEGFA/VEGF.

It is found in the secreted. Functionally, growth factor active in angiogenesis and endothelial cell growth, stimulating their proliferation and migration. It binds to the receptor FLT1/VEGFR-1. Also promotes cell tumor growth. The protein is Placenta growth factor (PGF) of Bos taurus (Bovine).